Consider the following 266-residue polypeptide: Na(+)-translocating NADH-quinone reductase subunit C (266 aa).

Residues 16-36 (LLVVVILCLVCSVVVAGAAVG) traverse the membrane as a helical segment. Thr-232 bears the FMN phosphoryl threonine mark.

The protein belongs to the NqrC family. Composed of six subunits; NqrA, NqrB, NqrC, NqrD, NqrE and NqrF. Requires FMN as cofactor.

The protein localises to the cell inner membrane. It catalyses the reaction a ubiquinone + n Na(+)(in) + NADH + H(+) = a ubiquinol + n Na(+)(out) + NAD(+). Functionally, NQR complex catalyzes the reduction of ubiquinone-1 to ubiquinol by two successive reactions, coupled with the transport of Na(+) ions from the cytoplasm to the periplasm. NqrA to NqrE are probably involved in the second step, the conversion of ubisemiquinone to ubiquinol. This Yersinia pestis protein is Na(+)-translocating NADH-quinone reductase subunit C.